An 870-amino-acid polypeptide reads, in one-letter code: UvrABC system protein B (870 aa).

Positions 20-410 constitute a Helicase ATP-binding domain; the sequence is EGVDNNDRTQ…VFAEQVIRPT (391 aa). Residue 33–40 coordinates ATP; that stretch reads GVTGSGKT. The Beta-hairpin signature appears at 86-109; sequence YYDYYQPEAYVPRTDTFIEKESSI. The Helicase C-terminal domain maps to 425 to 591; that stretch reads QVDDVVGEIR…SVKSRISDIL (167 aa). The UVR domain maps to 620 to 655; it reads KAHLDAMEKQMRDAAANLDFEKAARIRDEIKRLREM. Disordered stretches follow at residues 671-698 and 741-870; these read ESPV…QERF and AKPS…RPGK. The segment covering 679 to 689 has biased composition (basic residues); that stretch reads KGKHNKGVAKH. Composition is skewed to basic and acidic residues over residues 793–808 and 827–836; these read NSLD…KPVE and TDVKDRDDSA. Residues 858–870 are compositionally biased toward basic residues; it reads EKRRPGKTGRPGK.

This sequence belongs to the UvrB family. As to quaternary structure, forms a heterotetramer with UvrA during the search for lesions. Interacts with UvrC in an incision complex.

The protein localises to the cytoplasm. The UvrABC repair system catalyzes the recognition and processing of DNA lesions. A damage recognition complex composed of 2 UvrA and 2 UvrB subunits scans DNA for abnormalities. Upon binding of the UvrA(2)B(2) complex to a putative damaged site, the DNA wraps around one UvrB monomer. DNA wrap is dependent on ATP binding by UvrB and probably causes local melting of the DNA helix, facilitating insertion of UvrB beta-hairpin between the DNA strands. Then UvrB probes one DNA strand for the presence of a lesion. If a lesion is found the UvrA subunits dissociate and the UvrB-DNA preincision complex is formed. This complex is subsequently bound by UvrC and the second UvrB is released. If no lesion is found, the DNA wraps around the other UvrB subunit that will check the other stand for damage. The sequence is that of UvrABC system protein B from Mesorhizobium japonicum (strain LMG 29417 / CECT 9101 / MAFF 303099) (Mesorhizobium loti (strain MAFF 303099)).